We begin with the raw amino-acid sequence, 134 residues long: Ribonuclease P protein component 2 (134 aa).

Belongs to the eukaryotic/archaeal RNase P protein component 2 family. As to quaternary structure, consists of a catalytic RNA component and at least 4-5 protein subunits. Forms a subcomplex with Rnp3 which stimulates the catalytic RNA.

Its subcellular location is the cytoplasm. The enzyme catalyses Endonucleolytic cleavage of RNA, removing 5'-extranucleotides from tRNA precursor.. Its function is as follows. Part of ribonuclease P, a protein complex that generates mature tRNA molecules by cleaving their 5'-ends. The polypeptide is Ribonuclease P protein component 2 (Methanocaldococcus jannaschii (strain ATCC 43067 / DSM 2661 / JAL-1 / JCM 10045 / NBRC 100440) (Methanococcus jannaschii)).